A 194-amino-acid chain; its full sequence is ATP synthase subunit b 1 (194 aa).

A helical membrane pass occupies residues 1–21; sequence MLLGTVVTVLSTLPAIAYAMD.

It belongs to the ATPase B chain family. In terms of assembly, F-type ATPases have 2 components, F(1) - the catalytic core - and F(0) - the membrane proton channel. F(1) has five subunits: alpha(3), beta(3), gamma(1), delta(1), epsilon(1). F(0) has three main subunits: a(1), b(2) and c(10-14). The alpha and beta chains form an alternating ring which encloses part of the gamma chain. F(1) is attached to F(0) by a central stalk formed by the gamma and epsilon chains, while a peripheral stalk is formed by the delta and b chains.

The protein resides in the cell inner membrane. F(1)F(0) ATP synthase produces ATP from ADP in the presence of a proton or sodium gradient. F-type ATPases consist of two structural domains, F(1) containing the extramembraneous catalytic core and F(0) containing the membrane proton channel, linked together by a central stalk and a peripheral stalk. During catalysis, ATP synthesis in the catalytic domain of F(1) is coupled via a rotary mechanism of the central stalk subunits to proton translocation. Functionally, component of the F(0) channel, it forms part of the peripheral stalk, linking F(1) to F(0). This chain is ATP synthase subunit b 1, found in Granulibacter bethesdensis (strain ATCC BAA-1260 / CGDNIH1).